The primary structure comprises 191 residues: Protein GrpE (191 aa).

2 stretches are compositionally biased toward basic and acidic residues: residues 1-19 and 29-42; these read MKDEHNQEHDHLSQKEPES and QQGEEKQEASEKEC. The disordered stretch occupies residues 1–42; the sequence is MKDEHNQEHDHLSQKEPESYQKACACKEQQGEEKQEASEKEC.

The protein belongs to the GrpE family. Homodimer.

The protein localises to the cytoplasm. In terms of biological role, participates actively in the response to hyperosmotic and heat shock by preventing the aggregation of stress-denatured proteins, in association with DnaK and GrpE. It is the nucleotide exchange factor for DnaK and may function as a thermosensor. Unfolded proteins bind initially to DnaJ; upon interaction with the DnaJ-bound protein, DnaK hydrolyzes its bound ATP, resulting in the formation of a stable complex. GrpE releases ADP from DnaK; ATP binding to DnaK triggers the release of the substrate protein, thus completing the reaction cycle. Several rounds of ATP-dependent interactions between DnaJ, DnaK and GrpE are required for fully efficient folding. The polypeptide is Protein GrpE (Helicobacter pylori (strain HPAG1)).